The primary structure comprises 126 residues: MAQLSKDDILEAVANMSVMDVVDLVKAMEEKFGVSAQAAIAVAGPVAGGEAAAAEEKTEFNVKMVSFGDNKIGVIKAIRTITGLGLKEAKDLVESVPSVVKESVSKEEAEKIKKELEEAGAKVELE.

This sequence belongs to the bacterial ribosomal protein bL12 family. As to quaternary structure, homodimer. Part of the ribosomal stalk of the 50S ribosomal subunit. Forms a multimeric L10(L12)X complex, where L10 forms an elongated spine to which 2 to 4 L12 dimers bind in a sequential fashion. Binds GTP-bound translation factors.

Functionally, forms part of the ribosomal stalk which helps the ribosome interact with GTP-bound translation factors. Is thus essential for accurate translation. This chain is Large ribosomal subunit protein bL12, found in Coxiella burnetii (strain CbuK_Q154) (Coxiella burnetii (strain Q154)).